The primary structure comprises 500 residues: Glycerol kinase (500 aa).

Residue threonine 12 coordinates ADP. ATP is bound by residues threonine 12, threonine 13, and serine 14. Residue threonine 12 coordinates sn-glycerol 3-phosphate. An ADP-binding site is contributed by arginine 16. Positions 82, 83, 135, and 245 each coordinate sn-glycerol 3-phosphate. Glycerol contacts are provided by arginine 82, glutamate 83, tyrosine 135, aspartate 245, and glutamine 246. Positions 267 and 310 each coordinate ADP. Positions 267, 310, 314, and 411 each coordinate ATP. ADP contacts are provided by glycine 411 and asparagine 415.

The protein belongs to the FGGY kinase family. Homotetramer and homodimer (in equilibrium).

It catalyses the reaction glycerol + ATP = sn-glycerol 3-phosphate + ADP + H(+). It participates in polyol metabolism; glycerol degradation via glycerol kinase pathway; sn-glycerol 3-phosphate from glycerol: step 1/1. With respect to regulation, activated by phosphorylation and inhibited by fructose 1,6-bisphosphate (FBP). Key enzyme in the regulation of glycerol uptake and metabolism. Catalyzes the phosphorylation of glycerol to yield sn-glycerol 3-phosphate. This Clostridium perfringens (strain ATCC 13124 / DSM 756 / JCM 1290 / NCIMB 6125 / NCTC 8237 / Type A) protein is Glycerol kinase.